The sequence spans 543 residues: Zinc finger CCCH-type with G patch domain-containing protein (543 aa).

Disordered stretches follow at residues 55–79 and 95–132; these read AATS…DNPI and TEDS…DKLD. Residues 65-76 show a composition bias toward low complexity; the sequence is DTAGRAPPATAD. Positions 118 to 131 are enriched in acidic residues; the sequence is DDDADNDDDADDKL. Residues 186–209 form a C3H1-type zinc finger; the sequence is PCAYFLEGECRFTDEKCRYSHGEV. Residues 272-304 are disordered; sequence PFEDLLPLDEDEDGQEAAEDSESDTDGADEEEA. Over residues 277–304 the composition is skewed to acidic residues; the sequence is LPLDEDEDGQEAAEDSESDTDGADEEEA. The G-patch domain occupies 335-381; it reads TRGIGSKIMQKMGYIVGTGLGREGEGIVVPVSAQVLPQGRSLDYCME. The disordered stretch occupies residues 438–460; that stretch reads GAAGGESSRPNRNRPGALSRQEL.

It localises to the nucleus. In terms of biological role, transcription repressor. This Anopheles gambiae (African malaria mosquito) protein is Zinc finger CCCH-type with G patch domain-containing protein.